We begin with the raw amino-acid sequence, 430 residues long: MAVFPLSAKHRKYALRALAVSIILVSAAYIASTEGTERVRPQRVEQKLPPLSWGGSGVQTAYWVQEAVQPGDSLADVLARSGMARDEIARITEKYGGEADLRHLRADQSVHVLVGGDGSAREVQFFTDEDGERNLVALEKKGGIWRRSASDADMKVLPTLRSVVVKTSARGSLARAEVPVEIRESLSGIFAGRFSLDGLKEGDAVRLLYDSLYFHGQQVAAGDILAAEVVKGGTTHQAFYYRSDKEGGGGGNYYDEDGRVLQEKGGFNIEPLVYTRISSPFGYRMHPILHTWRLHTGIDYAAPQGTPVRASADGVITFKGRKGGYGNAVMIRHANGVETLYAHLSAFSQAQGNVRGGEVIGFVGSTGRSTGPHLHYEARINGQPVNPVSVALPTPELTQADKAAFAAQKQKADALLARLRGIPVTVSQSD.

The Zn(2+) site is built by histidine 295, aspartate 299, and histidine 375.

The protein belongs to the peptidase M23B family. As to quaternary structure, monomer. Zn(2+) is required as a cofactor. Likely to be synthesized as a proenzyme. The cleavage of the N-terminal domain is probably required for the activation of the enzyme.

The protein localises to the cell outer membrane. With respect to regulation, peptidoglycan (PG) degradation activity is completely inhibited by zinc chelating EDTA and phenanthroline. Its function is as follows. Has both endopeptidase and DD-carboxypeptidase activities. Degrades cell wall peptidoglycan (PG) to allow consummate expression of pili. Degrades N.gonorrhoeae and E.coli PG side chains in vitro. Required for proper piliation, which in turn is required for normal colony morphology, resistance to H(2)O(2) damage and defense against killing by human polymorphonuclear leukocytes (PMNs). Involved in type IV pilus biogenesis. Involved in resistance against non-oxidative killing by adherent CXCL8/IL8-primed human PMNs. Protects from killing by PMN-produced antimicrobial factors, which kill by a mechanism completely independent of reactive oxygen species (ROS) production of the PMNs. Provides protection against oxidative damage caused by peroxides H(2)O(2) and cumene hydroperoxide in vitro. This is DD-carboxypeptidase/endopeptidase Mpg from Neisseria gonorrhoeae (strain ATCC 700825 / FA 1090).